Consider the following 263-residue polypeptide: CRISPR-associated protein Cas5 2 (263 aa).

Belongs to the CRISPR-associated protein Cas5 family. Subtype I-A/Apern subfamily. Part of the aCascade ribonucleoprotein complex, minimally composed of Csa2 and Cas5a, which binds crRNA. Other possible components of aCascade in strain P1 are Cas6b (SSO1437) and Csa5 (SSO1443), while SSO1399, Cas5b (SSO1400) and SSO1401 have sometimes been seen weakly associated. Csa2 is probably the major RNA-binding subunit. The Csa2-Cas5a-crRNA complex also binds target DNA homologous to crRNA, probably forming an R-loop. Purified aCascade forms a filament about 6 nm in width.

CRISPR (clustered regularly interspaced short palindromic repeat) is an adaptive immune system that provides protection against mobile genetic elements (viruses, transposable elements and conjugative plasmids). CRISPR clusters contain spacers, sequences complementary to antecedent mobile elements, and target invading nucleic acids. CRISPR clusters are transcribed and processed into CRISPR RNA (crRNA). The protein is CRISPR-associated protein Cas5 2 (cas5b) of Saccharolobus solfataricus (strain ATCC 35092 / DSM 1617 / JCM 11322 / P2) (Sulfolobus solfataricus).